Reading from the N-terminus, the 113-residue chain is N-alpha-acetyltransferase 38, NatC auxiliary subunit (113 aa).

The interval 1–29 is disordered; the sequence is MAAVLEENGCSRQSSPGAGDSDAEAGDTA. Residues 28 to 106 enclose the Sm domain; that stretch reads TARHKLESLL…IVSIQVELES (79 aa).

It belongs to the snRNP Sm proteins family. In terms of assembly, component of the N-terminal acetyltransferase C (NatC) complex.

It localises to the cytoplasm. The protein resides in the nucleus. Functionally, auxillary component of the N-terminal acetyltransferase C (NatC) complex which catalyzes acetylation of N-terminal methionine residues. N-terminal acetylation protects proteins from ubiquitination and degradation by the N-end rule pathway. This Xenopus tropicalis (Western clawed frog) protein is N-alpha-acetyltransferase 38, NatC auxiliary subunit (naa38).